The chain runs to 231 residues: F-box protein SKIP8 (231 aa).

A disordered region spans residues 1 to 24 (MPSTPLANGGTPPMGGGERTTVTT). Residues 34–80 (VSMMEQLVPEITTHALSYLDYPSLCRLSMTNSLMRKAANDDNAWKAL) form the F-box domain.

Part of a SCF (ASK-cullin-F-box) protein ligase complex. Interacts with SKP1A/ASK1.

The protein operates within protein modification; protein ubiquitination. In terms of biological role, component of SCF(ASK-cullin-F-box) E3 ubiquitin ligase complexes, which may mediate the ubiquitination and subsequent proteasomal degradation of target proteins. The sequence is that of F-box protein SKIP8 (SKIP8) from Arabidopsis thaliana (Mouse-ear cress).